A 473-amino-acid polypeptide reads, in one-letter code: Probable serine/threonine-protein kinase glkA (473 aa).

The tract at residues 1 to 84 is disordered; the sequence is MTIPTDNNSS…QSSSTATVNS (84 aa). The span at 7–84 shows a compositional bias: low complexity; it reads NNSSNNKGYN…QSSSTATVNS (78 aa). Residues 91–366 enclose the Protein kinase domain; the sequence is YEIIKQVGQG…IDEIIAHPFL (276 aa). Residues 97–105 and Lys119 contribute to the ATP site; that span reads VGQGTFGKV. The Proton acceptor role is filled by Asp208. Disordered regions lie at residues 389-418 and 437-473; these read GKSS…SNNK and SSNL…TNTI. Low complexity predominate over residues 442 to 466; that stretch reads SIDNSNNGKSSSSSNNIPSLNNSNN.

It belongs to the protein kinase superfamily. CMGC Ser/Thr protein kinase family. GSK-3 subfamily.

The catalysed reaction is L-seryl-[tau protein] + ATP = O-phospho-L-seryl-[tau protein] + ADP + H(+). It catalyses the reaction L-threonyl-[tau protein] + ATP = O-phospho-L-threonyl-[tau protein] + ADP + H(+). The chain is Probable serine/threonine-protein kinase glkA (glkA) from Dictyostelium discoideum (Social amoeba).